The chain runs to 1792 residues: Eukaryotic translation initiation factor 4G (1792 aa).

The segment covering 1 to 12 (MSQRGDRGEGHA) has biased composition (basic and acidic residues). 11 disordered regions span residues 1 to 285 (MSQR…PRPP), 424 to 446 (DSSG…TYGS), 491 to 590 (SPSM…PTPV), 612 to 659 (NSVP…EDLK), 678 to 761 (GVNK…NESH), 874 to 912 (VASE…EITR), 960 to 993 (SSSI…LDDW), 999 to 1018 (MSTP…EANG), 1275 to 1299 (GERE…EERE), 1407 to 1503 (WQQR…HRTT), and 1537 to 1600 (ELSS…KLYS). Residues 21–42 (FGGGHRGGGGVGGAGKGGGGSS) are compositionally biased toward gly residues. Pro residues predominate over residues 88-107 (PLRPPAPQNAPAHVPVPAPR). 2 stretches are compositionally biased toward polar residues: residues 147–156 (RISSTSTSQG) and 179–191 (STMQ…SSAP). 3 stretches are compositionally biased toward low complexity: residues 216 to 243 (PQAP…PLQQ), 263 to 278 (PSQV…SVPN), and 432 to 442 (PSVQQQSQPVS). A compositionally biased stretch (polar residues) spans 491–517 (SPSMNTGPGSNKDNLAGSTTSGHSQVT). Basic and acidic residues-rich tracts occupy residues 545-564 (DVNK…KDNE), 571-587 (KSGE…EKHP), and 633-643 (DSNKNATKDTR). Over residues 644–654 (NLSQEPQSASS) the composition is skewed to polar residues. Over residues 699-718 (AADASSIDRSSARSTSESTE) the composition is skewed to low complexity. Residues 964 to 990 (ADHELPDESSEKEVNMGEDEGKKKVEL) show a composition bias toward basic and acidic residues. Positions 1018–1030 (GRKRYSRDFLLTL) are EIF4E-binding. The MIF4G domain occupies 1183-1406 (QRQLKAILNK…RDSIDLRKNK (224 aa)). Over residues 1278–1289 (EEAEADKTEEEG) the composition is skewed to acidic residues. Basic and acidic residues-rich tracts occupy residues 1290–1299 (EIKQTKEERE) and 1411–1432 (RKVE…ERHA). 2 stretches are compositionally biased toward low complexity: residues 1439 to 1450 (RGSVVGSGPRRG) and 1461 to 1470 (SAAALASPSS). Basic and acidic residues-rich tracts occupy residues 1490 to 1503 (IRFE…HRTT) and 1559 to 1572 (AREE…DRSG). The segment covering 1576 to 1593 (PNTQFAGPSNRPASQEGR) has biased composition (polar residues). The 125-residue stretch at 1603-1727 (DLREKSISAI…SLQEVGTLIE (125 aa)) folds into the MI domain.

This sequence belongs to the eukaryotic initiation factor 4G family. As to quaternary structure, EIF4F is a multi-subunit complex, the composition of which varies with external and internal environmental conditions. It is composed of at least EIF4A, EIF4E and EIF4G. In higher plants two isoforms of EIF4F have been identified, named isoform EIF4F and isoform EIF(iso)4F. Isoform EIF4F has subunits p220 and p26, whereas isoform EIF(iso)4F has subunits p82 and p28.

In terms of biological role, component of the protein complex eIF4F, which is involved in the recognition of the mRNA cap, ATP-dependent unwinding of 5'-terminal secondary structure and recruitment of mRNA to the ribosome. The protein is Eukaryotic translation initiation factor 4G of Oryza sativa subsp. japonica (Rice).